The sequence spans 66 residues: Alpha-conotoxin Vc1a (66 aa).

Positions 1–25 (MGMRMMFTVFLLVVLATTVVSSTSG) are cleaved as a signal peptide. The propeptide occupies 26–47 (RREFRGRNAAAKASDLVSLTDK). Cystine bridges form between Cys51–Cys57 and Cys52–Cys65. The interval 53-55 (SDP) is ser-Xaa-Pro motif, crucial for potent interaction with nAChR. Key region for inhibition of alpha-9-alpha-10/CHRNA9-CHRNA10 nAChR stretches follow at residues 54–56 (DPR) and 60–64 (DHPEI). The residue at position 55 (Pro55) is a 4-hydroxyproline. Glu63 bears the 4-carboxyglutamate mark. At Cys65 the chain carries Cysteine amide.

This sequence belongs to the conotoxin A superfamily. Post-translationally, vc1.1 is described as having no post-translational modifications (except C-terminal amidation), whereas Vc1a contains a hydroxyproline at Pro-55 and a 4-carboxyglutamate at Glu-63 (and a C-terminal amidation). In terms of processing, hydroxylation of Pro-55 is not important for inhibition of alpha-9-alpha-10/CHRNA9-CHRNA10 nAChRs, since [P6O]Vc1.1 (Pro-55 hydroxylated) shows similar inhibition than native toxin (IC(50)=99.1 nM). In contrast, hydroxylation of Pro-55 seems to impair inhibition of HVA calcium channel currents, since [P6O]Vc1.1 has no effect on HVA calcium channel currents. In vivo, hydroxylation of Pro-55 seems to induce the loss of analgesic effects in rat models of neuropathic pain, since [P6O]Vc1.1 has no effect on mechanical allodynia. Gamma-carboxylation of Glu-63 is not important for inhibition of alpha-9-alpha-10/CHRNA9-CHRNA10 nAChRs, since [E14gamma]Vc1.1 (carboxyglutamate at Glu-63) shows similar inhibition than native toxin (IC(50)=65.3 nM). In contrast, gamma-carboxylation of Glu-63 seems to impair inhibition of HVA calcium channel currents, since [E14gamma]Vc1.1 has no effect on HVA calcium channel currents. Post-translationally, non-native isomers 'ribbon' (with disulfide connectivity C1-C4; C2-C3) and 'beads' (with disulfide connectivity C1-C2; C3-C4) of Vc1.1 also inhibit HVA calcium channel currents in rat DRG neurons (20-30% inhibition at 1 uM toxin). It has been shown that both reduced and alkylated Vc1.1 have no effect on HVA calcium channel currents. The observed activity can be attributed to specific isomers. In terms of processing, [C3S]Vc1.1(1-8) mutant is C-terminally amidated. As to expression, expressed by the venom duct.

Its subcellular location is the secreted. In terms of biological role, alpha-conotoxins act on postsynaptic membranes, they bind to the nicotinic acetylcholine receptors (nAChR) and thus inhibit them. This toxin (native toxin Vc1a; hydroxylated and gamma-carboxylated) blocks alpha-9-alpha-10/CHRNA9-CHRNA10 nAChRs (IC(50)=62.9 nM). In contrast to the non-post-translationally modified analog Vc1.1, Vc1a does not inhibit high voltage-activated (HVA) calcium channel currents. In vivo, in contrast to Vc1.1, Vc1a does not show analgesic effects in rat models of neuropathic pain. Functionally, the synthetic peptide Vc1.1 (a non-hydroxylated and non-gamma-carboxylated analog of Vc1a) has two types of targets. It blocks alpha-9-alpha-10/CHRNA9-CHRNA10 nAChRs (on rat receptors, IC(50)=19-109 nM) (with preference for rat over human receptors) and inhibits high voltage-activated (HVA) calcium channel (Cav2.2, Cav2.3) currents by acting on GABA(B) receptors (GABBR1 and GABBR2) (IC(50)=1.7 nM). It also shows moderate inhibition on alpha-6/alpha-3-beta-2-beta-3 (CHRNA6/CHRNA3-CHRNB2-CHRNB3) (IC(50)=140 nM) and alpha-6/alpha-3-beta-4 (CHRNA6/CHRNA3-CHRNB4) (IC(50)=980 nM). On alpha-9-alpha-10/CHRNA9-CHRNA10 nAChR, it most likely interacts with the alpha-10(+)/alpha-9(-)interface of the receptor. In vivo, it acts as a powerful analgesic in rat models of neuropathic pain. This Conus victoriae (Queen Victoria cone) protein is Alpha-conotoxin Vc1a.